The chain runs to 67 residues: MPKMKTKSSAKKRFRVRPGGTVKRGQAFKRHILTKKTTKNKRHLRGAVSVHETNMGHMAQMLPFAGL.

Over residues 1–16 (MPKMKTKSSAKKRFRV) the composition is skewed to basic residues. The interval 1-24 (MPKMKTKSSAKKRFRVRPGGTVKR) is disordered.

Belongs to the bacterial ribosomal protein bL35 family.

This is Large ribosomal subunit protein bL35 from Paracidovorax citrulli (strain AAC00-1) (Acidovorax citrulli).